The sequence spans 365 residues: Deoxyguanosinetriphosphate triphosphohydrolase-like protein (365 aa).

In terms of domain architecture, HD spans 52–187 (RLTHSIEVSQ…VDHADEIAYV (136 aa)).

Belongs to the dGTPase family. Type 2 subfamily.

This Wolinella succinogenes (strain ATCC 29543 / DSM 1740 / CCUG 13145 / JCM 31913 / LMG 7466 / NCTC 11488 / FDC 602W) (Vibrio succinogenes) protein is Deoxyguanosinetriphosphate triphosphohydrolase-like protein.